The following is a 677-amino-acid chain: DNA ligase (677 aa).

NAD(+)-binding positions include 32–36 (DAQYD), 81–82 (SL), and E112. The active-site N6-AMP-lysine intermediate is K114. NAD(+) is bound by residues R135, E171, K288, and K312. Zn(2+) contacts are provided by C416, C419, C434, and C439. Positions 598–677 (NKNMPFSGME…REFINMLEQS (80 aa)) constitute a BRCT domain.

This sequence belongs to the NAD-dependent DNA ligase family. LigA subfamily. It depends on Mg(2+) as a cofactor. Mn(2+) serves as cofactor.

The enzyme catalyses NAD(+) + (deoxyribonucleotide)n-3'-hydroxyl + 5'-phospho-(deoxyribonucleotide)m = (deoxyribonucleotide)n+m + AMP + beta-nicotinamide D-nucleotide.. Functionally, DNA ligase that catalyzes the formation of phosphodiester linkages between 5'-phosphoryl and 3'-hydroxyl groups in double-stranded DNA using NAD as a coenzyme and as the energy source for the reaction. It is essential for DNA replication and repair of damaged DNA. The chain is DNA ligase from Dehalococcoides mccartyi (strain CBDB1).